Here is a 570-residue protein sequence, read N- to C-terminus: Periplasmic trehalase (570 aa).

An N-terminal signal peptide occupies residues 1–34; the sequence is MIPPEIRRSVLLQKAIKLALAGTLLTFASFSATA. Residues arginine 159, 166–167, asparagine 203, 212–214, 284–286, and glycine 317 each bind substrate; these read WD, RSQ, and RPE. Catalysis depends on proton donor/acceptor residues aspartate 319 and glutamate 503. Residue glutamate 518 coordinates substrate. The disordered stretch occupies residues 544 to 570; it reads KPCDSVPSTRPASLSATPTKTPSAATQ. Over residues 554–570 the composition is skewed to low complexity; that stretch reads PASLSATPTKTPSAATQ.

This sequence belongs to the glycosyl hydrolase 37 family. Monomer.

It localises to the periplasm. The enzyme catalyses alpha,alpha-trehalose + H2O = alpha-D-glucose + beta-D-glucose. Its function is as follows. Provides the cells with the ability to utilize trehalose at high osmolarity by splitting it into glucose molecules that can subsequently be taken up by the phosphotransferase-mediated uptake system. The polypeptide is Periplasmic trehalase (Salmonella newport (strain SL254)).